A 201-amino-acid chain; its full sequence is Probable nicotinate-nucleotide adenylyltransferase (201 aa).

It belongs to the NadD family.

The enzyme catalyses nicotinate beta-D-ribonucleotide + ATP + H(+) = deamido-NAD(+) + diphosphate. It participates in cofactor biosynthesis; NAD(+) biosynthesis; deamido-NAD(+) from nicotinate D-ribonucleotide: step 1/1. In terms of biological role, catalyzes the reversible adenylation of nicotinate mononucleotide (NaMN) to nicotinic acid adenine dinucleotide (NaAD). The chain is Probable nicotinate-nucleotide adenylyltransferase from Neisseria meningitidis serogroup C / serotype 2a (strain ATCC 700532 / DSM 15464 / FAM18).